Here is a 342-residue protein sequence, read N- to C-terminus: Dof zinc finger protein DOF4.6 (342 aa).

A disordered region spans residues 21 to 54 (NTCPKPQPQPLQPQQPPSVGGERKARPEKDQAVN). A compositionally biased stretch (pro residues) spans 25-36 (KPQPQPLQPQQP). The segment covering 41 to 51 (GERKARPEKDQ) has biased composition (basic and acidic residues). The Dof-type zinc finger occupies 53 to 107 (VNCPRCNSTNTKFCYYNNYSLTQPRYFCKGCRRYWTEGGSLRNIPVGGGSRKNKR). Zn(2+)-binding residues include cysteine 55, cysteine 58, cysteine 80, and cysteine 83. The disordered stretch occupies residues 94-136 (RNIPVGGGSRKNKRSHSSSSDISNNHSDSTQPATKKHLSDHHH). The segment covering 110-122 (SSSSDISNNHSDS) has biased composition (low complexity). The segment covering 127–136 (TKKHLSDHHH) has biased composition (basic residues).

Accumulates in the stele.

The protein resides in the nucleus. Its function is as follows. Transcription factor that binds specifically to a 5'-AA[AG]G-3' consensus core sequence. The polypeptide is Dof zinc finger protein DOF4.6 (Arabidopsis thaliana (Mouse-ear cress)).